Here is a 154-residue protein sequence, read N- to C-terminus: 17 kDa surface antigen (154 aa).

The first 19 residues, 1–19, serve as a signal peptide directing secretion; sequence MKLLSKIMIIALAASMLQA. The N-palmitoyl cysteine moiety is linked to residue Cys-20. The S-diacylglycerol cysteine moiety is linked to residue Cys-20.

It belongs to the rickettsiale 17 kDa surface antigen family.

It localises to the cell outer membrane. This Rickettsia rhipicephali protein is 17 kDa surface antigen (omp).